The chain runs to 421 residues: Alpha-tubulin N-acetyltransferase 1 (421 aa).

One can recognise an N-acetyltransferase domain in the interval 1-190; that stretch reads MEFPFDVDAL…NNFVIFEGFF (190 aa). N6-acetyllysine; by autocatalysis is present on lysine 56. An acetyl-CoA-binding site is contributed by 124-137; the sequence is FYIHESVQRHGHGR. Lysine 146 is modified (N6-acetyllysine; by autocatalysis). Acetyl-CoA is bound at residue 160-169; that stretch reads SPKLLKFLNK. The segment at 214–235 is disordered; it reads PIPAAPARKLPPKRAEGDIKPY. Residues 226 to 235 are compositionally biased toward basic and acidic residues; it reads KRAEGDIKPY. 2 positions are modified to N6-acetyllysine; by autocatalysis: lysine 233 and lysine 244. Positions 252–284 are disordered; the sequence is PLNRAPRRATPPAHPPPRSSSLGNSPDRGPLRP. A phosphoserine mark is found at serine 272 and serine 276. At arginine 305 the chain carries Asymmetric dimethylarginine. Serine 315 bears the Phosphoserine mark. Position 323 is an omega-N-methylarginine (arginine 323). Polar residues predominate over residues 342-351; it reads FNTSFLGTGN. Positions 342-398 are disordered; that stretch reads FNTSFLGTGNQERKQGEQEAEDRSASEDQVLLQDGSGEEPTHTVAPRAQAPPAQSWM. The segment covering 352–367 has biased composition (basic and acidic residues); that stretch reads QERKQGEQEAEDRSAS.

This sequence belongs to the acetyltransferase ATAT1 family. In terms of assembly, component of the BBSome complex. Interacts with AP2 alpha-adaptins, including AP2A2, but not with AP1 gamma-adaptin (AP1G1/AP1G2); this interaction is required for efficient alpha-tubulin acetylation, hence clathrin-coated pits are sites of microtubule acetylation. Autoacetylation strongly increases tubulin acetylation.

It localises to the cytoplasm. The protein localises to the membrane. It is found in the clathrin-coated pit. Its subcellular location is the cell junction. The protein resides in the focal adhesion. It localises to the cell projection. The protein localises to the axon. It is found in the cytoskeleton. Its subcellular location is the spindle. The enzyme catalyses L-lysyl-[alpha-tubulin] + acetyl-CoA = N(6)-acetyl-L-lysyl-[alpha-tubulin] + CoA + H(+). Its function is as follows. Specifically acetylates 'Lys-40' in alpha-tubulin on the lumenal side of microtubules. Promotes microtubule destabilization and accelerates microtubule dynamics; this activity may be independent of acetylation activity. Acetylates alpha-tubulin with a slow enzymatic rate, due to a catalytic site that is not optimized for acetyl transfer. Enters the microtubule through each end and diffuses quickly throughout the lumen of microtubules. Acetylates only long/old microtubules because of its slow acetylation rate since it does not have time to act on dynamically unstable microtubules before the enzyme is released. Required for normal sperm flagellar function. Promotes directional cell locomotion and chemotaxis, through AP2A2-dependent acetylation of alpha-tubulin at clathrin-coated pits that are concentrated at the leading edge of migrating cells. May facilitate primary cilium assembly. The protein is Alpha-tubulin N-acetyltransferase 1 of Rattus norvegicus (Rat).